Reading from the N-terminus, the 228-residue chain is Lipoprotein-releasing system ATP-binding protein LolD (228 aa).

The 224-residue stretch at 5–228 (FALSAISKSF…SGTLQNYTDY (224 aa)) folds into the ABC transporter domain. Residue 40 to 47 (GPSGSGKS) participates in ATP binding.

The protein belongs to the ABC transporter superfamily. Lipoprotein translocase (TC 3.A.1.125) family. As to quaternary structure, the complex is composed of two ATP-binding proteins (LolD) and two transmembrane proteins (LolC and LolE).

Its subcellular location is the cell inner membrane. Functionally, part of the ABC transporter complex LolCDE involved in the translocation of mature outer membrane-directed lipoproteins, from the inner membrane to the periplasmic chaperone, LolA. Responsible for the formation of the LolA-lipoprotein complex in an ATP-dependent manner. In Ehrlichia ruminantium (strain Gardel), this protein is Lipoprotein-releasing system ATP-binding protein LolD.